Here is a 168-residue protein sequence, read N- to C-terminus: Cell division inhibitor SulA (168 aa).

Residues Ala106 to Tyr112 form a ftsZ binding region. Residues Lys161–His168 form a lon protease binding region.

The protein belongs to the SulA family. Interacts with FtsZ. In terms of processing, is rapidly cleaved and degraded by the Lon protease once DNA damage is repaired.

Component of the SOS system and an inhibitor of cell division. Accumulation of SulA causes rapid cessation of cell division and the appearance of long, non-septate filaments. In the presence of GTP, binds a polymerization-competent form of FtsZ in a 1:1 ratio, thus inhibiting FtsZ polymerization and therefore preventing it from participating in the assembly of the Z ring. This mechanism prevents the premature segregation of damaged DNA to daughter cells during cell division. The sequence is that of Cell division inhibitor SulA from Yersinia enterocolitica serotype O:8 / biotype 1B (strain NCTC 13174 / 8081).